A 314-amino-acid chain; its full sequence is uncharacterized protein (314 aa).

Disordered stretches follow at residues 170 to 203 and 258 to 314; these read RSSM…NPDE and VGES…PKKR. The segment covering 171-186 has biased composition (low complexity); it reads SSMNSQSQMSESSFPT. Over residues 187-200 the composition is skewed to pro residues; that stretch reads PIDPPPRIPHPPLN. Over residues 261–272 the composition is skewed to polar residues; it reads SSRQGENTQNVH. A compositionally biased stretch (basic and acidic residues) spans 289-303; sequence RFKDDARKSNEDEHM.

This is an uncharacterized protein from Arabidopsis thaliana (Mouse-ear cress).